Here is a 766-residue protein sequence, read N- to C-terminus: Serine/threonine-protein kinase tousled-like 1 (766 aa).

At Met-1 the chain carries N-acetylmethionine. Polar residues predominate over residues 1-19 (MSVQSSSGSLEGPPSWSQL). The tract at residues 1-197 (MSVQSSSGSL…SPSPTALAFG (197 aa)) is disordered. Low complexity predominate over residues 20–33 (STSPTPGSAAAARS). Phosphothreonine is present on Thr-38. Residues 43 to 64 (RPREGAMDELHSLDPRRQELLE) are compositionally biased toward basic and acidic residues. Residues Ser-54, Ser-77, and Ser-80 each carry the phosphoserine modification. Over residues 68–85 (TGVASGSTGSTGSCSVGA) the composition is skewed to low complexity. The span at 87–103 (ASTNNESSNHSFGSLGS) shows a compositional bias: polar residues. Basic and acidic residues predominate over residues 105-121 (SDKESETPEKKQSESSR). Phosphoserine occurs at positions 134, 159, 174, and 176. A compositionally biased stretch (low complexity) spans 170 to 192 (SPQNSHSHSTPSSSVRPNSPSPT). The stretch at 230-281 (QDLEKKEGRIDDLLRANCDLRRQIDEQQKLLEKYKERLNKCISMSKKLLIEK) forms a coiled coil. The disordered stretch occupies residues 346 to 383 (LAKRKPPTANNSQAPSTNSEPKQRKNKAVNGAENDPFV). The span at 353–365 (TANNSQAPSTNSE) shows a compositional bias: polar residues. Residues 397–445 (HEQEEIFKLRLGHLKKEEAEIQAELERLERVRNLHIRELKRINNEDNSQ) adopt a coiled-coil conformation. Residues 456 to 734 (YLLLHLLGRG…VHQLANDPYL (279 aa)) form the Protein kinase domain. Residues 462–470 (LGRGGFSEV) and Lys-485 contribute to the ATP site. Catalysis depends on Asp-586, which acts as the Proton acceptor. Position 743 is a phosphoserine (Ser-743).

This sequence belongs to the protein kinase superfamily. Ser/Thr protein kinase family. In terms of assembly, heterodimer with TLK2. The cofactor is Mg(2+). Widely expressed. Present in fetal placenta, liver, kidney and pancreas but not heart or skeletal muscle. Also found in adult cell lines. Isoform 3 is ubiquitously expressed in all tissues examined.

It localises to the nucleus. It catalyses the reaction L-seryl-[protein] + ATP = O-phospho-L-seryl-[protein] + ADP + H(+). The catalysed reaction is L-threonyl-[protein] + ATP = O-phospho-L-threonyl-[protein] + ADP + H(+). Cell-cycle regulated, maximal activity in S-phase. Inactivated by phosphorylation at Ser-743, potentially by CHEK1. Rapidly and transiently inhibited by phosphorylation following the generation of DNA double-stranded breaks during S-phase. This is cell cycle checkpoint and ATM-pathway dependent and appears to regulate processes involved in chromatin assembly. Isoform 3 phosphorylates and enhances the stability of the t-SNARE SNAP23, augmenting its assembly with syntaxin. Isoform 3 protects the cells from the ionizing radiation by facilitating the repair of DSBs. In vitro, phosphorylates histone H3 at 'Ser-10'. The chain is Serine/threonine-protein kinase tousled-like 1 (TLK1) from Homo sapiens (Human).